We begin with the raw amino-acid sequence, 317 residues long: Protein IMPACT-B (317 aa).

The region spanning 17-118 (EEIEALSSIY…EKIREFLTEK (102 aa)) is the RWD domain. A disordered region spans residues 296–317 (DSTEETSKAGGKSKKPKSKKTK). The segment covering 306–317 (GKSKKPKSKKTK) has biased composition (basic residues).

The protein belongs to the IMPACT family. As to quaternary structure, interacts with GCN1; prevents the interaction of GCN1 with EIF2AK4/GCN2 and inhibits EIF2AK4/GCN2 kinase activity. Interaction with RPL39; this interaction occurs in a GCN1-independent manner. Associates with ribosomes; this interaction occurs in a GCN1-independent manner. Associates with actin; this interaction occurs in a GCN1-independent manner.

Its subcellular location is the cytoplasm. Its function is as follows. Translational regulator that ensures constant high levels of translation upon a variety of stress conditions, such as amino acid starvation, UV-C irradiation, proteasome inhibitor treatment and glucose deprivation. Plays a role as a negative regulator of the EIF2AK4/GCN2 kinase activity; impairs GCN1-mediated EIF2AK4/GCN2 activation, and hence EIF2AK4/GCN2-mediated eIF-2-alpha phosphorylation and subsequent down-regulation of protein synthesis. Plays a role in differentiation of neuronal cells by stimulating neurite outgrowth. This Xenopus tropicalis (Western clawed frog) protein is Protein IMPACT-B (impact-B).